Here is a 658-residue protein sequence, read N- to C-terminus: Carnitine O-palmitoyltransferase 2, mitochondrial (658 aa).

The N-terminal 25 residues, 1–25 (MVPRLLLRAWPRGPAVGPGAPSRPL), are a transit peptide targeting the mitochondrion. The Mitochondrial matrix segment spans residues 26-178 (SAGSGPGQYL…GLLEPEVFHL (153 aa)). K69 carries the N6-succinyllysine modification. At K79 the chain carries N6-acetyllysine. K85 carries the N6-succinyllysine modification. The segment at residues 179-208 (NPAKSDTDTFKRLIRFVPSSLSWYGAYLVN) is an intramembrane region (note=Mitochondrial inner membrane). The Mitochondrial matrix segment spans residues 209 to 658 (AYPLDMSQYF…DALEGKSIKS (450 aa)). Residue K239 is modified to N6-acetyllysine; alternate. Position 239 is an N6-succinyllysine; alternate (K239). N6-acetyllysine is present on K305. The active-site Proton acceptor is H372. K418 carries the post-translational modification N6-acetyllysine; alternate. Position 418 is an N6-succinyllysine; alternate (K418). N6-succinyllysine is present on residues K424 and K439. 452–464 (GKEFLKKQKLSPD) provides a ligand contact to CoA. Positions 486, 488, and 499 each coordinate (R)-carnitine. 2 positions are modified to N6-acetyllysine; alternate: K510 and K544. K510 and K544 each carry N6-succinyllysine; alternate.

This sequence belongs to the carnitine/choline acetyltransferase family.

It is found in the mitochondrion inner membrane. It catalyses the reaction (R)-carnitine + hexadecanoyl-CoA = O-hexadecanoyl-(R)-carnitine + CoA. It carries out the reaction octanoyl-CoA + (R)-carnitine = O-octanoyl-(R)-carnitine + CoA. The catalysed reaction is decanoyl-CoA + (R)-carnitine = O-decanoyl-(R)-carnitine + CoA. The enzyme catalyses dodecanoyl-CoA + (R)-carnitine = O-dodecanoyl-R-carnitine + CoA. It catalyses the reaction tetradecanoyl-CoA + (R)-carnitine = O-tetradecanoyl-(R)-carnitine + CoA. It carries out the reaction (R)-carnitine + octadecanoyl-CoA = O-octadecanoyl-(R)-carnitine + CoA. The catalysed reaction is eicosanoyl-CoA + (R)-carnitine = O-eicosanoyl-(R)-carnitine + CoA. The enzyme catalyses (9Z)-tetradecenoyl-CoA + (R)-carnitine = O-(9Z)-tetradecenoyl-(R)-carnitine + CoA. It catalyses the reaction (5Z)-tetradecenoyl-CoA + (R)-carnitine = O-(5Z)-tetradecenoyl-(R)-carnitine + CoA. It carries out the reaction (R)-carnitine + (9Z)-octadecenoyl-CoA = O-(9Z)-octadecenoyl-(R)-carnitine + CoA. The catalysed reaction is 4,8-dimethylnonanoyl-CoA + (R)-carnitine = O-4,8-dimethylnonanoyl-(R)-carnitine + CoA. Its pathway is lipid metabolism; fatty acid beta-oxidation. In terms of biological role, involved in the intramitochondrial synthesis of acylcarnitines from accumulated acyl-CoA metabolites. Reconverts acylcarnitines back into the respective acyl-CoA esters that can then undergo beta-oxidation, an essential step for the mitochondrial uptake of long-chain fatty acids and their subsequent beta-oxidation in the mitochondrion. Active with medium (C8-C12) and long-chain (C14-C18) acyl-CoA esters. This chain is Carnitine O-palmitoyltransferase 2, mitochondrial (CPT2), found in Macaca fascicularis (Crab-eating macaque).